The sequence spans 129 residues: Small ribosomal subunit protein uS9 (129 aa).

This sequence belongs to the universal ribosomal protein uS9 family.

This Helicobacter pylori (strain HPAG1) protein is Small ribosomal subunit protein uS9.